Here is a 401-residue protein sequence, read N- to C-terminus: Acetylornithine aminotransferase (401 aa).

Pyridoxal 5'-phosphate is bound by residues 121–122 (GA) and phenylalanine 154. Arginine 157 lines the N(2)-acetyl-L-ornithine pocket. 239–242 (DEVQ) contacts pyridoxal 5'-phosphate. Lysine 268 carries the N6-(pyridoxal phosphate)lysine modification. Serine 296 contributes to the N(2)-acetyl-L-ornithine binding site. Pyridoxal 5'-phosphate is bound at residue threonine 297.

Belongs to the class-III pyridoxal-phosphate-dependent aminotransferase family. ArgD subfamily. Homodimer. Pyridoxal 5'-phosphate is required as a cofactor.

The protein resides in the cytoplasm. The enzyme catalyses N(2)-acetyl-L-ornithine + 2-oxoglutarate = N-acetyl-L-glutamate 5-semialdehyde + L-glutamate. Its pathway is amino-acid biosynthesis; L-arginine biosynthesis; N(2)-acetyl-L-ornithine from L-glutamate: step 4/4. The chain is Acetylornithine aminotransferase from Myxococcus xanthus.